A 327-amino-acid chain; its full sequence is Undecaprenyl-phosphate 4-deoxy-4-formamido-L-arabinose transferase (327 aa).

At Met-1–Leu-235 the chain is on the cytoplasmic side. The chain crosses the membrane as a helical span at residues Leu-236–Val-256. The Periplasmic segment spans residues Leu-257–Gly-269. Residues Val-270–Leu-290 traverse the membrane as a helical segment. Residues Leu-291–Gln-327 lie on the Cytoplasmic side of the membrane.

This sequence belongs to the glycosyltransferase 2 family.

Its subcellular location is the cell inner membrane. The enzyme catalyses UDP-4-deoxy-4-formamido-beta-L-arabinose + di-trans,octa-cis-undecaprenyl phosphate = 4-deoxy-4-formamido-alpha-L-arabinopyranosyl di-trans,octa-cis-undecaprenyl phosphate + UDP. The protein operates within glycolipid biosynthesis; 4-amino-4-deoxy-alpha-L-arabinose undecaprenyl phosphate biosynthesis; 4-amino-4-deoxy-alpha-L-arabinose undecaprenyl phosphate from UDP-4-deoxy-4-formamido-beta-L-arabinose and undecaprenyl phosphate: step 1/2. Its pathway is bacterial outer membrane biogenesis; lipopolysaccharide biosynthesis. Catalyzes the transfer of 4-deoxy-4-formamido-L-arabinose from UDP to undecaprenyl phosphate. The modified arabinose is attached to lipid A and is required for resistance to polymyxin and cationic antimicrobial peptides. The chain is Undecaprenyl-phosphate 4-deoxy-4-formamido-L-arabinose transferase from Salmonella agona (strain SL483).